Here is a 620-residue protein sequence, read N- to C-terminus: Dihydroxy-acid dehydratase (620 aa).

D82 contacts Mg(2+). C123 provides a ligand contact to [2Fe-2S] cluster. Residues D124 and K125 each contribute to the Mg(2+) site. N6-carboxylysine is present on K125. A [2Fe-2S] cluster-binding site is contributed by C197. E493 contacts Mg(2+). The Proton acceptor role is filled by S519.

It belongs to the IlvD/Edd family. As to quaternary structure, homodimer. [2Fe-2S] cluster is required as a cofactor. Mg(2+) serves as cofactor.

It catalyses the reaction (2R)-2,3-dihydroxy-3-methylbutanoate = 3-methyl-2-oxobutanoate + H2O. The catalysed reaction is (2R,3R)-2,3-dihydroxy-3-methylpentanoate = (S)-3-methyl-2-oxopentanoate + H2O. It functions in the pathway amino-acid biosynthesis; L-isoleucine biosynthesis; L-isoleucine from 2-oxobutanoate: step 3/4. It participates in amino-acid biosynthesis; L-valine biosynthesis; L-valine from pyruvate: step 3/4. Functionally, functions in the biosynthesis of branched-chain amino acids. Catalyzes the dehydration of (2R,3R)-2,3-dihydroxy-3-methylpentanoate (2,3-dihydroxy-3-methylvalerate) into 2-oxo-3-methylpentanoate (2-oxo-3-methylvalerate) and of (2R)-2,3-dihydroxy-3-methylbutanoate (2,3-dihydroxyisovalerate) into 2-oxo-3-methylbutanoate (2-oxoisovalerate), the penultimate precursor to L-isoleucine and L-valine, respectively. This chain is Dihydroxy-acid dehydratase, found in Bifidobacterium longum (strain NCC 2705).